The chain runs to 274 residues: Bis(5'-nucleosyl)-tetraphosphatase, symmetrical (274 aa).

Belongs to the Ap4A hydrolase family.

It catalyses the reaction P(1),P(4)-bis(5'-adenosyl) tetraphosphate + H2O = 2 ADP + 2 H(+). Its function is as follows. Hydrolyzes diadenosine 5',5'''-P1,P4-tetraphosphate to yield ADP. This Shewanella sediminis (strain HAW-EB3) protein is Bis(5'-nucleosyl)-tetraphosphatase, symmetrical.